The following is a 383-amino-acid chain: NifS-like protein (383 aa).

Pyridoxal 5'-phosphate-binding positions include 58-59 and 184-186; these read SE and SLN.

Belongs to the class-V pyridoxal-phosphate-dependent aminotransferase family. NifS/IscS subfamily. The cofactor is pyridoxal 5'-phosphate.

The protein localises to the virion. This is NifS-like protein from African swine fever virus (isolate Pig/Kenya/KEN-50/1950) (ASFV).